The sequence spans 91 residues: Large ribosomal subunit protein bL28 (91 aa).

It belongs to the bacterial ribosomal protein bL28 family.

The chain is Large ribosomal subunit protein bL28 from Protochlamydia amoebophila (strain UWE25).